Reading from the N-terminus, the 644-residue chain is Macrolide export ATP-binding/permease protein MacB (644 aa).

Residues 4–242 (IECKNINRYF…SNVGRIQEKA (239 aa)) enclose the ABC transporter domain. 40-47 (GQSGSGKS) contacts ATP. The next 4 membrane-spanning stretches (helical) occupy residues 270 to 290 (LLTM…VALG), 524 to 544 (IALI…LVSV), 574 to 594 (LICI…SLVF), and 607 to 627 (AASV…FGFM).

The protein belongs to the ABC transporter superfamily. Macrolide exporter (TC 3.A.1.122) family. In terms of assembly, homodimer.

The protein localises to the cell inner membrane. Non-canonical ABC transporter that contains transmembrane domains (TMD), which form a pore in the inner membrane, and an ATP-binding domain (NBD), which is responsible for energy generation. Overexpression confers resistance against macrolides. This Neisseria gonorrhoeae protein is Macrolide export ATP-binding/permease protein MacB.